The following is a 354-amino-acid chain: NADH-quinone oxidoreductase subunit H (354 aa).

Transmembrane regions (helical) follow at residues 22–42 (ILIR…YLIL), 91–111 (YLVA…VIPF), 124–144 (LLYV…AGWA), 162–182 (VSYE…SGSL), 203–223 (LLSW…ISGV), 250–270 (GMTF…ISTM), 291–311 (IPGF…FIWI), and 326–346 (LGWK…AIWI).

This sequence belongs to the complex I subunit 1 family. In terms of assembly, NDH-1 is composed of 14 different subunits. Subunits NuoA, H, J, K, L, M, N constitute the membrane sector of the complex.

It localises to the cell inner membrane. It catalyses the reaction a quinone + NADH + 5 H(+)(in) = a quinol + NAD(+) + 4 H(+)(out). Its function is as follows. NDH-1 shuttles electrons from NADH, via FMN and iron-sulfur (Fe-S) centers, to quinones in the respiratory chain. The immediate electron acceptor for the enzyme in this species is believed to be ubiquinone. Couples the redox reaction to proton translocation (for every two electrons transferred, four hydrogen ions are translocated across the cytoplasmic membrane), and thus conserves the redox energy in a proton gradient. This subunit may bind ubiquinone. In Cupriavidus metallidurans (strain ATCC 43123 / DSM 2839 / NBRC 102507 / CH34) (Ralstonia metallidurans), this protein is NADH-quinone oxidoreductase subunit H.